A 288-amino-acid chain; its full sequence is Quinate/shikimate dehydrogenase (288 aa).

The substrate site is built by K71 and D107. Residues A132–A135, N155–D158, K205, C232–N235, and G255 contribute to the NAD(+) site.

It belongs to the shikimate dehydrogenase family. In terms of assembly, homodimer.

The enzyme catalyses L-quinate + NAD(+) = 3-dehydroquinate + NADH + H(+). It carries out the reaction L-quinate + NADP(+) = 3-dehydroquinate + NADPH + H(+). It catalyses the reaction shikimate + NADP(+) = 3-dehydroshikimate + NADPH + H(+). The catalysed reaction is shikimate + NAD(+) = 3-dehydroshikimate + NADH + H(+). Its pathway is metabolic intermediate biosynthesis; chorismate biosynthesis; chorismate from D-erythrose 4-phosphate and phosphoenolpyruvate: step 4/7. Its function is as follows. The actual biological function of YdiB remains unclear, nor is it known whether 3-dehydroshikimate or quinate represents the natural substrate. Catalyzes the reversible NAD-dependent reduction of both 3-dehydroshikimate (DHSA) and 3-dehydroquinate to yield shikimate (SA) and quinate, respectively. It can use both NAD or NADP for catalysis, however it has higher catalytic efficiency with NAD. The chain is Quinate/shikimate dehydrogenase from Escherichia coli O139:H28 (strain E24377A / ETEC).